We begin with the raw amino-acid sequence, 185 residues long: Protein GrpE (185 aa).

A compositionally biased stretch (basic and acidic residues) spans 1–12 (MADEQLNEKDLN). The segment at 1 to 22 (MADEQLNEKDLNVEETGAGNAA) is disordered.

The protein belongs to the GrpE family. As to quaternary structure, homodimer.

Its subcellular location is the cytoplasm. In terms of biological role, participates actively in the response to hyperosmotic and heat shock by preventing the aggregation of stress-denatured proteins, in association with DnaK and GrpE. It is the nucleotide exchange factor for DnaK and may function as a thermosensor. Unfolded proteins bind initially to DnaJ; upon interaction with the DnaJ-bound protein, DnaK hydrolyzes its bound ATP, resulting in the formation of a stable complex. GrpE releases ADP from DnaK; ATP binding to DnaK triggers the release of the substrate protein, thus completing the reaction cycle. Several rounds of ATP-dependent interactions between DnaJ, DnaK and GrpE are required for fully efficient folding. This is Protein GrpE from Pseudomonas putida (strain ATCC 700007 / DSM 6899 / JCM 31910 / BCRC 17059 / LMG 24140 / F1).